We begin with the raw amino-acid sequence, 250 residues long: Probable fimbrial chaperone YfcS (250 aa).

The first 28 residues, 1-28 (MSDLLCSAKLGAMTLALLLSATSLSALA), serve as a signal peptide directing secretion.

Belongs to the periplasmic pilus chaperone family.

Its subcellular location is the periplasm. Functionally, part of the yfcOPQRSUV fimbrial operon. Could contribute to adhesion to various surfaces in specific environmental niches. Increases adhesion to eukaryotic T24 bladder epithelial cells in the absence of fim genes. In Escherichia coli (strain K12), this protein is Probable fimbrial chaperone YfcS (yfcS).